The primary structure comprises 123 residues: WAP four-disulfide core domain protein 5 (123 aa).

Residues 1-24 form the signal peptide; sequence MRIQSLLLLGALLAVGSQLPAVFG. WAP domains lie at 27–73 and 74–121; these read KGEK…CVPR and VSVK…RDPA. Intrachain disulfides connect cysteine 34–cysteine 62, cysteine 41–cysteine 66, cysteine 49–cysteine 61, cysteine 55–cysteine 70, cysteine 81–cysteine 109, cysteine 88–cysteine 113, cysteine 96–cysteine 108, and cysteine 102–cysteine 117.

The protein resides in the secreted. Functionally, putative acid-stable proteinase inhibitor. The chain is WAP four-disulfide core domain protein 5 (WFDC5) from Papio anubis (Olive baboon).